The primary structure comprises 72 residues: Large ribosomal subunit protein bL32 (72 aa).

Belongs to the bacterial ribosomal protein bL32 family.

This is Large ribosomal subunit protein bL32 from Dehalococcoides mccartyi (strain ATCC BAA-2100 / JCM 16839 / KCTC 5957 / BAV1).